The sequence spans 231 residues: uncharacterized protein (231 aa).

5 helical membrane-spanning segments follow: residues 36-56 (SLLA…SFFI), 58-78 (SQVT…ALQW), 83-103 (APLN…TLTP), 143-163 (FTVM…ASLL), and 170-190 (SIVN…YILY).

The protein belongs to the BI1 family.

Its subcellular location is the cell membrane. This is an uncharacterized protein from Campylobacter jejuni subsp. jejuni serotype O:2 (strain ATCC 700819 / NCTC 11168).